The chain runs to 434 residues: GTPase Obg (434 aa).

An Obg domain is found at 1-159 (MQFIDRCQIK…KTVRLELKYL (159 aa)). Residues 160 to 329 (ANVGIVGYPN…LVDRVFDLYQ (170 aa)) enclose the OBG-type G domain. GTP contacts are provided by residues 166 to 173 (GYPNAGKS), 191 to 195 (FTTLV), 212 to 215 (DIPG), 282 to 285 (NKMD), and 310 to 312 (ISA). Residues Ser173 and Thr193 each contribute to the Mg(2+) site. In terms of domain architecture, OCT spans 356 to 434 (EKTIDDDPLD…ICDYEYLIDE (79 aa)).

Belongs to the TRAFAC class OBG-HflX-like GTPase superfamily. OBG GTPase family. In terms of assembly, monomer. Requires Mg(2+) as cofactor.

Its subcellular location is the cytoplasm. In terms of biological role, an essential GTPase which binds GTP, GDP and possibly (p)ppGpp with moderate affinity, with high nucleotide exchange rates and a fairly low GTP hydrolysis rate. Plays a role in control of the cell cycle, stress response, ribosome biogenesis and in those bacteria that undergo differentiation, in morphogenesis control. This Mycoplasmoides gallisepticum (strain R(low / passage 15 / clone 2)) (Mycoplasma gallisepticum) protein is GTPase Obg.